The following is a 347-amino-acid chain: tRNA N6-adenosine threonylcarbamoyltransferase (347 aa).

Histidine 111 and histidine 115 together coordinate Fe cation. Residues 134-138, aspartate 167, glycine 180, and asparagine 277 contribute to the substrate site; that span reads LISGG. Aspartate 305 contributes to the Fe cation binding site.

Belongs to the KAE1 / TsaD family. It depends on Fe(2+) as a cofactor.

It is found in the cytoplasm. It catalyses the reaction L-threonylcarbamoyladenylate + adenosine(37) in tRNA = N(6)-L-threonylcarbamoyladenosine(37) in tRNA + AMP + H(+). Its function is as follows. Required for the formation of a threonylcarbamoyl group on adenosine at position 37 (t(6)A37) in tRNAs that read codons beginning with adenine. Is involved in the transfer of the threonylcarbamoyl moiety of threonylcarbamoyl-AMP (TC-AMP) to the N6 group of A37, together with TsaE and TsaB. TsaD likely plays a direct catalytic role in this reaction. This is tRNA N6-adenosine threonylcarbamoyltransferase from Actinobacillus pleuropneumoniae serotype 5b (strain L20).